A 106-amino-acid chain; its full sequence is Glutaredoxin-1 (106 aa).

Alanine 2 carries the N-acetylalanine modification. One can recognise a Glutaredoxin domain in the interval 3-106 (QEFVNCKIQP…TRLKQIGALQ (104 aa)). Position 9 is an N6-succinyllysine (lysine 9). Disulfide bonds link cysteine 23–cysteine 26 and cysteine 79–cysteine 83.

Belongs to the glutaredoxin family.

It localises to the cytoplasm. Functionally, has a glutathione-disulfide oxidoreductase activity in the presence of NADPH and glutathione reductase. Reduces low molecular weight disulfides and proteins. This is Glutaredoxin-1 (GLRX) from Homo sapiens (Human).